Here is a 365-residue protein sequence, read N- to C-terminus: Class I histocompatibility antigen, Gogo-A*0401 alpha chain (365 aa).

The first 24 residues, 1–24, serve as a signal peptide directing secretion; that stretch reads MAVMAPRTLVLLLSGALALTQTWA. Positions 25-114 are alpha-1; sequence GSHSMRYFYT…LRGYYNQSED (90 aa). Over 25-308 the chain is Extracellular; that stretch reads GSHSMRYFYT…EPSSQPTIPI (284 aa). Asparagine 110 carries an N-linked (GlcNAc...) asparagine glycan. The segment at 115-206 is alpha-2; it reads GSHTIQRMYG…ENGKETLQLT (92 aa). Intrachain disulfides connect cysteine 125-cysteine 188 and cysteine 227-cysteine 283. The alpha-3 stretch occupies residues 207–298; sequence DAPKTHMTHH…GLPKPLTLRW (92 aa). In terms of domain architecture, Ig-like C1-type spans 209–295; sequence PKTHMTHHPV…QHEGLPKPLT (87 aa). Residues 299–308 form a connecting peptide region; the sequence is EPSSQPTIPI. A helical transmembrane segment spans residues 309-332; it reads VGIIAGLVLFGAVIAGAVVAAVRW. The Cytoplasmic portion of the chain corresponds to 333–365; it reads RRKSSDRKGGSYSQAASSDSAQGSDVSLTACKV. Residues 338–365 form a disordered region; sequence DRKGGSYSQAASSDSAQGSDVSLTACKV. Residues 342 to 359 show a composition bias toward low complexity; that stretch reads GSYSQAASSDSAQGSDVS. Serine 343 is subject to Phosphoserine. Tyrosine 344 carries the post-translational modification Phosphotyrosine. 6 positions are modified to phosphoserine: serine 345, serine 349, serine 350, serine 352, serine 356, and serine 359.

It belongs to the MHC class I family. As to quaternary structure, heterodimer of an alpha chain and a beta chain (beta-2-microglobulin).

Its subcellular location is the membrane. Its function is as follows. Involved in the presentation of foreign antigens to the immune system. This is Class I histocompatibility antigen, Gogo-A*0401 alpha chain from Gorilla gorilla gorilla (Western lowland gorilla).